Here is a 474-residue protein sequence, read N- to C-terminus: Vasculin-like protein 1 (474 aa).

The disordered stretch occupies residues 17-42 (QSAKSPTATFEKHGEHLPRGEGRFGV). Residues 26–38 (FEKHGEHLPRGEG) are compositionally biased toward basic and acidic residues. Phosphoserine is present on residues S49 and S76. Positions 91 to 191 (GNPSGWHSSS…VWENPPSAKQ (101 aa)) are disordered. The span at 116 to 128 (NHRHWNGSFHSRK) shows a compositional bias: basic residues. Basic and acidic residues predominate over residues 136–154 (PPMEIREEKKEDKVEKLQF). S202 carries the post-translational modification Phosphoserine. Residues 238 to 371 (LVPKPVPPPS…EEGCHQNGLA (134 aa)) form a disordered region. Over residues 262-277 (GSLSSSRESAFTSPIS) the composition is skewed to polar residues. Residues 291–312 (SSPKESPSSTTPPIEISSSRLT) show a composition bias toward low complexity. S292 carries the phosphoserine modification. Position 301 is a phosphothreonine (T301). Basic and acidic residues-rich tracts occupy residues 317 to 346 (RTTDRKSEFLKTLKDDRNGDFSENRDCDKL) and 356 to 365 (EPKENGEEGC). A Phosphoserine modification is found at S382. The interval 453 to 474 (AEFEDSDTETSSSETSDDDAWK) is disordered.

Belongs to the vasculin family.

It is found in the nucleus. Possible transcription factor. The sequence is that of Vasculin-like protein 1 (GPBP1L1) from Homo sapiens (Human).